A 161-amino-acid chain; its full sequence is Troponin C, slow skeletal and cardiac muscles (161 aa).

Position 1 is an N-acetylmethionine (methionine 1). EF-hand domains follow at residues 16 to 51, 52 to 87, 92 to 127, and 128 to 161; these read QKNEFKAAFDIFVLGAEDGCISTKELGKVMRMLGQN, PTPEELQEMIDEVDEDGSGTVDFDEFLVMMVRCMKD, KTEEELSDLFRMFDKNADGYIDLEELKIMLQATGET, and ITEDDIEELMKDGDKNNDGRIDYDEFLEFMKGVE. Ca(2+) is bound by residues aspartate 65, aspartate 67, serine 69, threonine 71, glutamate 76, aspartate 105, asparagine 107, aspartate 109, tyrosine 111, glutamate 116, aspartate 141, asparagine 143, aspartate 145, arginine 147, and glutamate 152.

Belongs to the troponin C family.

Troponin is the central regulatory protein of striated muscle contraction. Tn consists of three components: Tn-I which is the inhibitor of actomyosin ATPase, Tn-T which contains the binding site for tropomyosin and Tn-C. The binding of calcium to Tn-C abolishes the inhibitory action of Tn on actin filaments. In Gallus gallus (Chicken), this protein is Troponin C, slow skeletal and cardiac muscles (TNNC1).